The following is a 331-amino-acid chain: 6-phosphogluconolactonase (331 aa).

Lys287 is modified (N6-acetyllysine).

This sequence belongs to the cycloisomerase 2 family.

The enzyme catalyses 6-phospho-D-glucono-1,5-lactone + H2O = 6-phospho-D-gluconate + H(+). It participates in carbohydrate degradation; pentose phosphate pathway; D-ribulose 5-phosphate from D-glucose 6-phosphate (oxidative stage): step 2/3. Functionally, catalyzes the hydrolysis of 6-phosphogluconolactone to 6-phosphogluconate. The protein is 6-phosphogluconolactonase of Shigella sonnei (strain Ss046).